Reading from the N-terminus, the 531-residue chain is Cytochrome P450 monooxygenase ffsD (531 aa).

The chain crosses the membrane as a helical span at residues 40–60 (VGALLGISLSVVLLLWVISVV). Cys475 provides a ligand contact to heme.

This sequence belongs to the cytochrome P450 family. It depends on heme as a cofactor.

It localises to the membrane. Its pathway is mycotoxin biosynthesis. Cytochrome P450 monooxygenase; part of the gene cluster that mediates the biosynthesis of the cytotoxic leucine-containing cytochalasans, including aspochalasin C, aspochalasin E, TMC-169, flavichalasine F, aspergillin PZ, aspochalasin M and flavichalasine G. The first step in the pathway is catalyzed by the hybrid PKS-NRPS ffsA that utilizes 8 units of malonyl-CoA to iteratively assemble the octaketide chain before addition of L-leucine by the C-terminal NRPS modules. Because ffsA lacks a designated enoylreductase (ER) domain, the required activity is provided the enoyl reductase fssC. The methyltransferase (MT) domain of ffsA catalyzes the alpha-methylation at C10 and C14 using S-adenosyl-L-methionine as the methyl-donating cosubstrate. Reduction by the hydrolyase ffsE, followed by dehydration and intra-molecular Diels-Alder cyclization by the Diels-Alderase ffsF then yield the required isoindolone-fused macrocycle. A number of oxidative steps catalyzed by the tailoring cytochrome P450 monooxygenase ffsD, the FAD-linked oxidoreductase ffsJ and the short-chain dehydrogenase/reductase ffsI, are further required to afford the final products. The protein is Cytochrome P450 monooxygenase ffsD of Aspergillus flavipes.